Here is a 357-residue protein sequence, read N- to C-terminus: Dihydroorotate dehydrogenase (quinone) (357 aa).

Residues 66-70 (AGFDK) and Thr-90 each bind FMN. Lys-70 contacts substrate. 115–119 (NRMGF) is a substrate binding site. FMN is bound by residues Asn-143 and Asn-176. Residue Asn-176 participates in substrate binding. Residue Ser-179 is the Nucleophile of the active site. Asn-181 is a binding site for substrate. Lys-212 and Thr-240 together coordinate FMN. Residue 241–242 (NT) coordinates substrate. FMN contacts are provided by residues Gly-264, Gly-293, and 314–315 (YT).

It belongs to the dihydroorotate dehydrogenase family. Type 2 subfamily. In terms of assembly, monomer. It depends on FMN as a cofactor.

It localises to the cell membrane. The enzyme catalyses (S)-dihydroorotate + a quinone = orotate + a quinol. The protein operates within pyrimidine metabolism; UMP biosynthesis via de novo pathway; orotate from (S)-dihydroorotate (quinone route): step 1/1. Its function is as follows. Catalyzes the conversion of dihydroorotate to orotate with quinone as electron acceptor. This Mycobacterium bovis (strain BCG / Pasteur 1173P2) protein is Dihydroorotate dehydrogenase (quinone).